The following is a 127-amino-acid chain: Multiple antibiotic resistance protein MarA (127 aa).

Residues 12-110 (HSILDWIEDN…DVPPHKYRMT (99 aa)) form the HTH araC/xylS-type domain. 2 DNA-binding regions (H-T-H motif) span residues 29–50 (EKVS…KKET) and 77–100 (ILYL…KNYF).

In terms of assembly, monomer.

May be a transcriptional activator of genes involved in the multiple antibiotic resistance (Mar) phenotype. It can also activate genes such as sodA, zwf and micF. The polypeptide is Multiple antibiotic resistance protein MarA (marA) (Escherichia coli (strain K12)).